The chain runs to 538 residues: Eukaryotic translation initiation factor 3 subunit L (538 aa).

In terms of domain architecture, PCI spans 305–513; sequence TFSDILLYIQ…IHIADTKVSH (209 aa).

It belongs to the eIF-3 subunit L family. As to quaternary structure, component of the eukaryotic translation initiation factor 3 (eIF-3) complex. The eIF-3 complex interacts with pix.

It localises to the cytoplasm. In terms of biological role, component of the eukaryotic translation initiation factor 3 (eIF-3) complex, which is involved in protein synthesis of a specialized repertoire of mRNAs and, together with other initiation factors, stimulates binding of mRNA and methionyl-tRNAi to the 40S ribosome. The eIF-3 complex specifically targets and initiates translation of a subset of mRNAs involved in cell proliferation. The protein is Eukaryotic translation initiation factor 3 subunit L of Drosophila mojavensis (Fruit fly).